The primary structure comprises 164 residues: Phosphopantetheine adenylyltransferase (164 aa).

S9 is a substrate binding site. ATP is bound by residues S9–F10 and H17. K41, L73, and K87 together coordinate substrate. ATP is bound by residues G88–R90, E98, and Y123–S129.

This sequence belongs to the bacterial CoaD family. As to quaternary structure, homohexamer. The cofactor is Mg(2+).

Its subcellular location is the cytoplasm. It carries out the reaction (R)-4'-phosphopantetheine + ATP + H(+) = 3'-dephospho-CoA + diphosphate. It participates in cofactor biosynthesis; coenzyme A biosynthesis; CoA from (R)-pantothenate: step 4/5. Its function is as follows. Reversibly transfers an adenylyl group from ATP to 4'-phosphopantetheine, yielding dephospho-CoA (dPCoA) and pyrophosphate. This chain is Phosphopantetheine adenylyltransferase, found in Clostridium botulinum (strain Okra / Type B1).